The primary structure comprises 92 residues: Acylphosphatase (92 aa).

Residues 3–92 enclose the Acylphosphatase-like domain; it reads TKHVLVSGIV…GPRSTHFEVT (90 aa). Catalysis depends on residues arginine 18 and asparagine 36.

It belongs to the acylphosphatase family.

The catalysed reaction is an acyl phosphate + H2O = a carboxylate + phosphate + H(+). This Alcanivorax borkumensis (strain ATCC 700651 / DSM 11573 / NCIMB 13689 / SK2) protein is Acylphosphatase (acyP).